Consider the following 403-residue polypeptide: Protein-export membrane protein SecD (403 aa).

Transmembrane regions (helical) follow at residues 14–34 (VILL…MGIQ), 238–258 (FAEG…VILI), 265–285 (ILVL…LGAA), 294–314 (LAAI…QIII), 336–356 (FFII…LAYI), and 365–385 (IGLL…GVFI).

It belongs to the SecD/SecF family. SecD subfamily. Part of the protein translocation apparatus. Forms a complex with SecF.

The protein localises to the cell membrane. Functionally, involved in protein export. This chain is Protein-export membrane protein SecD, found in Methanothermobacter thermautotrophicus (strain ATCC 29096 / DSM 1053 / JCM 10044 / NBRC 100330 / Delta H) (Methanobacterium thermoautotrophicum).